Reading from the N-terminus, the 247-residue chain is Cell division protein ZapD (247 aa).

This sequence belongs to the ZapD family. In terms of assembly, interacts with FtsZ.

The protein resides in the cytoplasm. Its function is as follows. Cell division factor that enhances FtsZ-ring assembly. Directly interacts with FtsZ and promotes bundling of FtsZ protofilaments, with a reduction in FtsZ GTPase activity. The polypeptide is Cell division protein ZapD (Citrobacter koseri (strain ATCC BAA-895 / CDC 4225-83 / SGSC4696)).